Reading from the N-terminus, the 61-residue chain is Large ribosomal subunit protein uL30 (61 aa).

The protein belongs to the universal ribosomal protein uL30 family. In terms of assembly, part of the 50S ribosomal subunit.

This Nitrosomonas europaea (strain ATCC 19718 / CIP 103999 / KCTC 2705 / NBRC 14298) protein is Large ribosomal subunit protein uL30.